The following is a 1234-amino-acid chain: Chromosome-associated kinesin KIF4B (1234 aa).

In terms of domain architecture, Kinesin motor spans 9–336 (PVRVALRCRP…LRYADRARKI (328 aa)). Position 88–95 (88–95 (GQTGSGKT)) interacts with ATP. Residues 350-999 (ELNHLKQQVQ…IKQKLILLQV (650 aa)) are a coiled coil. Residue S394 is modified to Phosphoserine. Disordered regions lie at residues 494–513 (EEAQ…AFTT) and 712–737 (KRLK…HGKE). Polar residues predominate over residues 498–513 (VETSPETSRSSDAFTT). Positions 663–1234 (QWKQKKDKEV…GCSPIEEEAH (572 aa)) are interaction with PRC1. The span at 713 to 737 (RLKDALQKQREVTDKRKETQSHGKE) shows a compositional bias: basic and acidic residues. The Nuclear localization signal signature appears at 793–798 (PKLRKC). T799 bears the Phosphothreonine mark. Residues S801, S951, S1001, S1013, S1017, and S1028 each carry the phosphoserine modification. The globular stretch occupies residues 1000-1234 (ASRQKHLPND…GCSPIEEEAH (235 aa)). 4 disordered regions span residues 1007 to 1030 (PNDT…PSRV), 1052 to 1076 (VNEH…KPTK), 1122 to 1143 (RQQG…GSFK), and 1183 to 1234 (TAPA…EEAH). Residues 1056 to 1071 (EDGDGDGDSDEGDDEE) show a composition bias toward acidic residues. The tract at residues 1086–1144 (QGCSCKGWCGNKQCGCRKQKSDCGVDCSCDPTKCRNRQQGKDSLGTVEQTQDSEGSFKL) is CRD; required for [4Fe-4S] cluster binding and localization to the spindle midzone and midbody during anaphase and telophase. A Phosphoserine modification is found at S1128. A Phosphothreonine modification is found at T1183. A Phosphoserine modification is found at S1188. K1196 participates in a covalent cross-link: Glycyl lysine isopeptide (Lys-Gly) (interchain with G-Cter in SUMO2). S1227 carries the post-translational modification Phosphoserine.

It belongs to the TRAFAC class myosin-kinesin ATPase superfamily. Kinesin family. Chromokinesin subfamily. The cofactor is [2Fe-2S] cluster. It depends on [4Fe-4S] cluster as a cofactor. As to expression, specifically expressed in testis.

It localises to the nucleus matrix. The protein localises to the cytoplasm. It is found in the cytoskeleton. Its function is as follows. Iron-sulfur (Fe-S) cluster binding motor protein that has a role in chromosome segregation during mitosis. Translocates PRC1 to the plus ends of interdigitating spindle microtubules during the metaphase to anaphase transition, an essential step for the formation of an organized central spindle midzone and midbody and for successful cytokinesis. May play a role in mitotic chromosomal positioning and bipolar spindle stabilization. This chain is Chromosome-associated kinesin KIF4B (KIF4B), found in Homo sapiens (Human).